A 289-amino-acid polypeptide reads, in one-letter code: ATP synthase gamma chain (289 aa).

This sequence belongs to the ATPase gamma chain family. F-type ATPases have 2 components, CF(1) - the catalytic core - and CF(0) - the membrane proton channel. CF(1) has five subunits: alpha(3), beta(3), gamma(1), delta(1), epsilon(1). CF(0) has three main subunits: a, b and c.

It is found in the cell inner membrane. In terms of biological role, produces ATP from ADP in the presence of a proton gradient across the membrane. The gamma chain is believed to be important in regulating ATPase activity and the flow of protons through the CF(0) complex. This Haemophilus influenzae (strain ATCC 51907 / DSM 11121 / KW20 / Rd) protein is ATP synthase gamma chain.